Reading from the N-terminus, the 204-residue chain is ADP-ribosylation factor-like protein 15 (204 aa).

GTP is bound by residues 39–46, 82–86, and 142–145; these read GLTGSGKT, ELGGA, and NHQD.

The protein belongs to the small GTPase superfamily. Arf family.

This chain is ADP-ribosylation factor-like protein 15 (Arl15), found in Mus musculus (Mouse).